A 320-amino-acid polypeptide reads, in one-letter code: Malate dehydrogenase (320 aa).

Residues 10–15 (GSGMIG) and D34 contribute to the NAD(+) site. Substrate contacts are provided by R83 and R89. NAD(+)-binding positions include N96 and 119-121 (ITN). Substrate contacts are provided by N121 and R152. H176 acts as the Proton acceptor in catalysis.

Belongs to the LDH/MDH superfamily. MDH type 3 family.

It catalyses the reaction (S)-malate + NAD(+) = oxaloacetate + NADH + H(+). In terms of biological role, catalyzes the reversible oxidation of malate to oxaloacetate. The protein is Malate dehydrogenase of Brucella anthropi (strain ATCC 49188 / DSM 6882 / CCUG 24695 / JCM 21032 / LMG 3331 / NBRC 15819 / NCTC 12168 / Alc 37) (Ochrobactrum anthropi).